The sequence spans 296 residues: Ribosome biogenesis GTPase A (296 aa).

The CP-type G domain maps to 14 to 178 (RRQVTEKLKL…LLDTPGILWP (165 aa)). GTP is bound by residues 58–61 (NKAD), 130–135 (NVGKST), and Gly-174.

This sequence belongs to the TRAFAC class YlqF/YawG GTPase family. MTG1 subfamily. As to quaternary structure, interacts with ctc. Interacts with the immature 50S ribosome subunit. 2 molecules of rbgA bind to one 50S subunit.

The protein localises to the cytoplasm. Essential protein that is required for a late step of 50S ribosomal subunit assembly. Has GTPase activity that is stimulated by interaction with the immature 50S ribosome subunit. Binds to the 23S rRNA. Required for the association of ribosomal proteins rplP and rpmA with the large subunit. The chain is Ribosome biogenesis GTPase A from Bacillus cereus (strain ATCC 14579 / DSM 31 / CCUG 7414 / JCM 2152 / NBRC 15305 / NCIMB 9373 / NCTC 2599 / NRRL B-3711).